The chain runs to 101 residues: NAD(P)H-quinone oxidoreductase subunit 4L (101 aa).

Helical transmembrane passes span 3–23, 30–50, and 64–84; these read LQYF…GLVT, VLMS…AFSN, and IFVI…VLAI.

It belongs to the complex I subunit 4L family. As to quaternary structure, NDH-1 can be composed of about 15 different subunits; different subcomplexes with different compositions have been identified which probably have different functions.

The protein localises to the cellular thylakoid membrane. It carries out the reaction a plastoquinone + NADH + (n+1) H(+)(in) = a plastoquinol + NAD(+) + n H(+)(out). The catalysed reaction is a plastoquinone + NADPH + (n+1) H(+)(in) = a plastoquinol + NADP(+) + n H(+)(out). Its function is as follows. NDH-1 shuttles electrons from an unknown electron donor, via FMN and iron-sulfur (Fe-S) centers, to quinones in the respiratory and/or the photosynthetic chain. The immediate electron acceptor for the enzyme in this species is believed to be plastoquinone. Couples the redox reaction to proton translocation, and thus conserves the redox energy in a proton gradient. Cyanobacterial NDH-1 also plays a role in inorganic carbon-concentration. This is NAD(P)H-quinone oxidoreductase subunit 4L from Leptolyngbya boryana (Plectonema boryanum).